Consider the following 275-residue polypeptide: Autophagy protein 5 (275 aa).

M1 carries the N-acetylmethionine modification. K130 is covalently cross-linked (Glycyl lysine isopeptide (Lys-Gly) (interchain with G-Cter in ATG12)).

Belongs to the ATG5 family. Forms a conjugate with ATG12. Part of the minor complex composed of 4 sets of ATG12-ATG5 and ATG16L1 (400 kDa); this complex interacts with ATG3 leading to disruption of ATG7 interaction and promotion of ATG8-like proteins lipidation. Forms an 800-kDa complex composed of ATG12-ATG5 and ATG16L2. The ATG12-ATG5 conjugate interacts with RAB33A; this interaction is bridged by ATG16L1 and promotes ATG12-ATG5-ATG16L1 complex recruitment to phagophores. Interacts with TECPR1; the interaction is direct and does not take place when ATG16L1 is associated with the ATG5-ATG12 conjugate. Interacts with DHX58/RIG-1, IFIH1/MDA5 and MAVS/IPS-1 in monomeric form as well as in ATG12-ATG5 conjugate form. The interaction with MAVS is further enhanced upon vesicular stomatitis virus (VSV) infection. Interacts with ATG3. Interacts with ATG7 and ATG10. Interacts with FADD. Interacts with Bassoon/BSN; this interaction is important for the regulation of presynaptic autophagy. Interacts with ATG16L2. Post-translationally, conjugated to ATG12; which is essential for autophagy, but is not required for association with isolation membrane. Acetylated by EP300.

It is found in the cytoplasm. The protein resides in the preautophagosomal structure membrane. Functionally, involved in autophagic vesicle formation. Conjugation with ATG12, through a ubiquitin-like conjugating system involving ATG7 as an E1-like activating enzyme and ATG10 as an E2-like conjugating enzyme, is essential for its function. The ATG12-ATG5 conjugate acts as an E3-like enzyme which is required for lipidation of ATG8 family proteins and their association to the vesicle membranes. Involved in mitochondrial quality control after oxidative damage, and in subsequent cellular longevity. Plays a critical role in multiple aspects of lymphocyte development and is essential for both B and T lymphocyte survival and proliferation. Required for optimal processing and presentation of antigens for MHC II. Involved in the maintenance of axon morphology and membrane structures, as well as in normal adipocyte differentiation. Promotes primary ciliogenesis through removal of OFD1 from centriolar satellites and degradation of IFT20 via the autophagic pathway. As part of the ATG8 conjugation system with ATG12 and ATG16L1, required for recruitment of LRRK2 to stressed lysosomes and induction of LRRK2 kinase activity in response to lysosomal stress. May play an important role in the apoptotic process, possibly within the modified cytoskeleton. Its expression is a relatively late event in the apoptotic process, occurring downstream of caspase activity. Plays a crucial role in IFN-gamma-induced autophagic cell death by interacting with FADD. The sequence is that of Autophagy protein 5 from Bos taurus (Bovine).